The following is a 624-amino-acid chain: UvrABC system protein C (624 aa).

The GIY-YIG domain occupies A25–V104. The UVR domain occupies S214–L249.

This sequence belongs to the UvrC family. In terms of assembly, interacts with UvrB in an incision complex.

The protein localises to the cytoplasm. Functionally, the UvrABC repair system catalyzes the recognition and processing of DNA lesions. UvrC both incises the 5' and 3' sides of the lesion. The N-terminal half is responsible for the 3' incision and the C-terminal half is responsible for the 5' incision. The sequence is that of UvrABC system protein C from Cyanothece sp. (strain PCC 7425 / ATCC 29141).